Reading from the N-terminus, the 714-residue chain is Neutral ceramidase A (714 aa).

An N-terminal signal peptide occupies residues 1 to 23; that stretch reads MKRSIVFIYSLVILLLSVGFIDA. Residues Asn218 and Asn246 are each glycosylated (N-linked (GlcNAc...) asparagine). Ser293 (nucleophile) is an active-site residue. Asn353, Asn373, Asn416, Asn571, Asn610, and Asn700 each carry an N-linked (GlcNAc...) asparagine glycan.

It belongs to the neutral ceramidase family.

The protein localises to the secreted. The enzyme catalyses an N-acylsphing-4-enine + H2O = sphing-4-enine + a fatty acid. Its function is as follows. Hydrolyzes the sphingolipid ceramide into sphingosine and free fatty acid at an optimal pH of 3.0. Has no activity toward glycosphingolipids, such as GalCer and Galbeta1-3GalNAcbeta1-4(NeuAcalpha2-3)Galbeta1-4Glcbeta1-1'Cer or sphingomyelin. In Dictyostelium discoideum (Social amoeba), this protein is Neutral ceramidase A (dcd2A).